Here is a 363-residue protein sequence, read N- to C-terminus: 3-dehydroquinate synthase (363 aa).

NAD(+)-binding positions include 72 to 77 (SGEKEK), 130 to 131 (TT), Lys142, and Lys151. 3 residues coordinate Zn(2+): Glu184, His247, and His264.

Belongs to the sugar phosphate cyclases superfamily. Dehydroquinate synthase family. It depends on Co(2+) as a cofactor. The cofactor is Zn(2+). NAD(+) serves as cofactor.

It is found in the cytoplasm. It catalyses the reaction 7-phospho-2-dehydro-3-deoxy-D-arabino-heptonate = 3-dehydroquinate + phosphate. Its pathway is metabolic intermediate biosynthesis; chorismate biosynthesis; chorismate from D-erythrose 4-phosphate and phosphoenolpyruvate: step 2/7. In terms of biological role, catalyzes the conversion of 3-deoxy-D-arabino-heptulosonate 7-phosphate (DAHP) to dehydroquinate (DHQ). This is 3-dehydroquinate synthase from Bacillus thuringiensis (strain Al Hakam).